Reading from the N-terminus, the 193-residue chain is ATP-dependent Clp protease proteolytic subunit 1 (193 aa).

Catalysis depends on serine 98, which acts as the Nucleophile. Histidine 123 is a catalytic residue.

It belongs to the peptidase S14 family. In terms of assembly, fourteen ClpP subunits assemble into 2 heptameric rings which stack back to back to give a disk-like structure with a central cavity, resembling the structure of eukaryotic proteasomes.

Its subcellular location is the cytoplasm. It carries out the reaction Hydrolysis of proteins to small peptides in the presence of ATP and magnesium. alpha-casein is the usual test substrate. In the absence of ATP, only oligopeptides shorter than five residues are hydrolyzed (such as succinyl-Leu-Tyr-|-NHMec, and Leu-Tyr-Leu-|-Tyr-Trp, in which cleavage of the -Tyr-|-Leu- and -Tyr-|-Trp bonds also occurs).. Cleaves peptides in various proteins in a process that requires ATP hydrolysis. Has a chymotrypsin-like activity. Plays a major role in the degradation of misfolded proteins. This chain is ATP-dependent Clp protease proteolytic subunit 1, found in Bacillus cereus (strain ATCC 10987 / NRS 248).